The chain runs to 133 residues: Large-conductance mechanosensitive channel (133 aa).

2 consecutive transmembrane segments (helical) span residues 10 to 30 (FAMR…GAFG) and 76 to 96 (GAFI…FLMI).

Belongs to the MscL family. Homopentamer.

The protein localises to the cell inner membrane. Its function is as follows. Channel that opens in response to stretch forces in the membrane lipid bilayer. May participate in the regulation of osmotic pressure changes within the cell. The protein is Large-conductance mechanosensitive channel of Pasteurella multocida (strain Pm70).